The chain runs to 314 residues: Vacuolar membrane protein SCY_4732 (314 aa).

A disordered region spans residues 32-61 (KPTSSVVSETSSKSLPSLTSSAFSTSSGTT). Residues 93 to 113 (VYIAVGAVIGAIFISILIWWL) form a helical membrane-spanning segment. Ser148, Ser254, and Ser274 each carry phosphoserine. The tract at residues 240-309 (EERKLNLNRP…PSMFLDDVLN (70 aa)) is disordered. A compositionally biased stretch (basic and acidic residues) spans 254–269 (SPERKEKKINSMEGYH).

It belongs to the PRM5 family.

Its subcellular location is the vacuole membrane. The protein is Vacuolar membrane protein SCY_4732 of Saccharomyces cerevisiae (strain YJM789) (Baker's yeast).